A 279-amino-acid chain; its full sequence is Diaminopimelate epimerase (279 aa).

Residues Asn-12, Gln-45, and Asn-65 each contribute to the substrate site. Cys-74 (proton donor) is an active-site residue. Residues 75–76, Asn-162, Asn-195, and 213–214 contribute to the substrate site; these read GN and ER. The active-site Proton acceptor is the Cys-222. 223–224 is a binding site for substrate; it reads GT.

The protein belongs to the diaminopimelate epimerase family. Homodimer.

It is found in the cytoplasm. The enzyme catalyses (2S,6S)-2,6-diaminopimelate = meso-2,6-diaminopimelate. The protein operates within amino-acid biosynthesis; L-lysine biosynthesis via DAP pathway; DL-2,6-diaminopimelate from LL-2,6-diaminopimelate: step 1/1. Functionally, catalyzes the stereoinversion of LL-2,6-diaminopimelate (L,L-DAP) to meso-diaminopimelate (meso-DAP), a precursor of L-lysine and an essential component of the bacterial peptidoglycan. This is Diaminopimelate epimerase from Shewanella woodyi (strain ATCC 51908 / MS32).